Here is a 307-residue protein sequence, read N- to C-terminus: Porphobilinogen deaminase (307 aa).

Cys-241 bears the S-(dipyrrolylmethanemethyl)cysteine mark.

It belongs to the HMBS family. As to quaternary structure, monomer. Requires dipyrromethane as cofactor.

The enzyme catalyses 4 porphobilinogen + H2O = hydroxymethylbilane + 4 NH4(+). It functions in the pathway porphyrin-containing compound metabolism; protoporphyrin-IX biosynthesis; coproporphyrinogen-III from 5-aminolevulinate: step 2/4. Its function is as follows. Tetrapolymerization of the monopyrrole PBG into the hydroxymethylbilane pre-uroporphyrinogen in several discrete steps. The chain is Porphobilinogen deaminase from Coxiella burnetii (strain CbuG_Q212) (Coxiella burnetii (strain Q212)).